The sequence spans 355 residues: UDP-N-acetylglucosamine--N-acetylmuramyl-(pentapeptide) pyrophosphoryl-undecaprenol N-acetylglucosamine transferase (355 aa).

UDP-N-acetyl-alpha-D-glucosamine contacts are provided by residues 15–17 (TGG), Asn127, Arg163, Ser191, Ile244, 263–268 (ALTVSE), and Gln288.

This sequence belongs to the glycosyltransferase 28 family. MurG subfamily.

The protein localises to the cell inner membrane. It catalyses the reaction di-trans,octa-cis-undecaprenyl diphospho-N-acetyl-alpha-D-muramoyl-L-alanyl-D-glutamyl-meso-2,6-diaminopimeloyl-D-alanyl-D-alanine + UDP-N-acetyl-alpha-D-glucosamine = di-trans,octa-cis-undecaprenyl diphospho-[N-acetyl-alpha-D-glucosaminyl-(1-&gt;4)]-N-acetyl-alpha-D-muramoyl-L-alanyl-D-glutamyl-meso-2,6-diaminopimeloyl-D-alanyl-D-alanine + UDP + H(+). Its pathway is cell wall biogenesis; peptidoglycan biosynthesis. Its function is as follows. Cell wall formation. Catalyzes the transfer of a GlcNAc subunit on undecaprenyl-pyrophosphoryl-MurNAc-pentapeptide (lipid intermediate I) to form undecaprenyl-pyrophosphoryl-MurNAc-(pentapeptide)GlcNAc (lipid intermediate II). This Escherichia coli O9:H4 (strain HS) protein is UDP-N-acetylglucosamine--N-acetylmuramyl-(pentapeptide) pyrophosphoryl-undecaprenol N-acetylglucosamine transferase.